We begin with the raw amino-acid sequence, 1659 residues long: Daxx-like protein (1659 aa).

2 disordered regions span residues 1–25 (MSAS…RRRL) and 265–336 (QLQQ…VRSL). A coiled-coil region spans residues 438–469 (LGQLQQEQQKILGQLQQQKQQQQQQQKKILGQ). Low complexity-rich tracts occupy residues 506–520 (SVGQ…QSQQ), 528–542 (KQQP…VGQF), and 600–625 (GQLQ…QQQQ). Disordered stretches follow at residues 506–542 (SVGQ…VGQF), 600–645 (GQLQ…TLAG), 658–713 (SAGQ…MPQK), 872–894 (TLPF…HVQG), 924–952 (LPPT…VQQQ), 1023–1060 (VESP…QSRA), and 1536–1555 (FKIA…EDDD). The span at 626-635 (KISAGQLQEH) shows a compositional bias: polar residues. Composition is skewed to low complexity over residues 636 to 645 (SQQQQKTLAG) and 658 to 698 (SAGQ…QPQQ). 2 stretches are compositionally biased toward polar residues: residues 699–711 (RTSA…QQMP) and 885–894 (APMTSTHVQG). The necessary for interaction with His3.3A and His3.3B stretch occupies residues 870 to 1659 (ARTLPFRSSQ…DQIIISDEES (790 aa)). Positions 924 to 937 (LPPTTSITPQLTPT) are enriched in low complexity. Over residues 1541 to 1555 (DGDDSEEESDSEDDD) the composition is skewed to acidic residues.

Interacts with p53 (via C-terminus). Interacts (via C-terminus) with His3.3A and His3.3B. Interacts with asf1. As to expression, ubiquitously expressed with higher levels in the head (at protein level). Expressed in the germ line, with prominent expression in primary spermatocytes and meiotic spermatocytes (at protein level). In ovaries, expressed in nurse cells and in the germinal vesicle of the ovarian follicle at stage 10 (at protein level).

The protein resides in the cytoplasm. Its subcellular location is the cytosol. It is found in the nucleus. It localises to the chromosome. Functionally, transcription regulator. Acts as a histone chaperone that facilitates deposition of histone H3.3. Has a role in chromatin remodeling together with asf1 and XNP. Has role in the transcriptional apoptotic response to oxidative and UV stress. This is Daxx-like protein from Drosophila melanogaster (Fruit fly).